Reading from the N-terminus, the 275-residue chain is Phosphonoacetaldehyde hydrolase (275 aa).

The active-site Nucleophile is the Asp15. 2 residues coordinate Mg(2+): Asp15 and Ala17. The active-site Schiff-base intermediate with substrate is Lys56. Asp189 is a binding site for Mg(2+).

Belongs to the HAD-like hydrolase superfamily. PhnX family. Homodimer. The cofactor is Mg(2+).

The catalysed reaction is phosphonoacetaldehyde + H2O = acetaldehyde + phosphate + H(+). In terms of biological role, involved in phosphonate degradation. This Pseudomonas aeruginosa (strain UCBPP-PA14) protein is Phosphonoacetaldehyde hydrolase.